Consider the following 215-residue polypeptide: Ependymin-2 (215 aa).

An N-terminal signal peptide occupies residues 1–20; it reads MHTVKLLCVVFSCLCAVAWA. N-linked (GlcNAc...) asparagine glycosylation is found at Asn-71 and Asn-94.

It belongs to the ependymin family. Forms disulfide-linked dimers. Different glycosylation variants are known as EPD-beta and EPD-gamma. In terms of processing, binds calcium through the terminal sialic acids. As to expression, EPDs are synthesized in the meninx and secreted in the cerebrospinal fluid.

It localises to the secreted. Its function is as follows. May play a role in neural plasticity. May be involved during axon regeneration. This chain is Ependymin-2 (epd2), found in Carassius auratus (Goldfish).